We begin with the raw amino-acid sequence, 84 residues long: RNA-binding protein Hfq (84 aa).

The Sm domain occupies 10 to 69; that stretch reads EPFLNTLRREHVPVSIYLVNGIKLQGQIESFDQYVVLLRNTVTQMVFKHAISTIVPGRAV.

The protein belongs to the Hfq family. As to quaternary structure, homohexamer.

Its function is as follows. RNA chaperone that binds small regulatory RNA (sRNAs) and mRNAs to facilitate mRNA translational regulation in response to envelope stress, environmental stress and changes in metabolite concentrations. Also binds with high specificity to tRNAs. In Verminephrobacter eiseniae (strain EF01-2), this protein is RNA-binding protein Hfq.